The sequence spans 236 residues: Pyridoxal 5'-phosphate synthase subunit PdxT (236 aa).

61 to 63 (GES) contacts L-glutamine. Cysteine 93 serves as the catalytic Nucleophile. Residues arginine 127 and 163-164 (IR) contribute to the L-glutamine site. Catalysis depends on charge relay system residues histidine 215 and glutamate 217.

Belongs to the glutaminase PdxT/SNO family. In terms of assembly, in the presence of PdxS, forms a dodecamer of heterodimers. Only shows activity in the heterodimer.

It catalyses the reaction aldehydo-D-ribose 5-phosphate + D-glyceraldehyde 3-phosphate + L-glutamine = pyridoxal 5'-phosphate + L-glutamate + phosphate + 3 H2O + H(+). It carries out the reaction L-glutamine + H2O = L-glutamate + NH4(+). It participates in cofactor biosynthesis; pyridoxal 5'-phosphate biosynthesis. Catalyzes the hydrolysis of glutamine to glutamate and ammonia as part of the biosynthesis of pyridoxal 5'-phosphate. The resulting ammonia molecule is channeled to the active site of PdxS. This Arthrobacter sp. (strain FB24) protein is Pyridoxal 5'-phosphate synthase subunit PdxT.